Here is a 314-residue protein sequence, read N- to C-terminus: MNQTPGSTVPETATPVTSPASSPSAPETTFTPVIITGMSGAGLSTAARVLEDLGWFVTHNLPPQMILPLVEMCAREDSPVDKVAVVCDVRSREFRGGLRETITELEEKNLAPTVLFLDARDDELIRRFDNVRRTHPLQGSQTLQVGIERERQMLSDLKEEADVVIDTSELSVHDLRRAIESSFRTIAKRVQHVTIESFGFKHGSPRDADFIIDARFLPNPFWVPELRPFRGVDKPVSDYVLSQKGAGEFLDNFIAMLDDMLPGYRHEGKNFITVGIGCTGGHHRSVAVSEELARRLGERPDLDVSVVHRDINRN.

The tract at residues 1–29 (MNQTPGSTVPETATPVTSPASSPSAPETT) is disordered. Low complexity predominate over residues 7 to 29 (STVPETATPVTSPASSPSAPETT). 37–44 (GMSGAGLS) contributes to the ATP binding site. 88 to 91 (DVRS) lines the GTP pocket.

The protein belongs to the RapZ-like family.

Functionally, displays ATPase and GTPase activities. This is Nucleotide-binding protein CE1710 from Corynebacterium efficiens (strain DSM 44549 / YS-314 / AJ 12310 / JCM 11189 / NBRC 100395).